A 194-amino-acid chain; its full sequence is MSMYNYVKEAWKVPANSYVKELQWSRMQDWRKEPSVIRVERPTRIDRARNLGYKAKQGIVVVRVSVRRGGLRKPRPKHSKKPSTLGINKITMAKSIQRIAEERAAKKYPNLEVLNSYWVGQDGKQKWYEVILVDSCHPSIKSDKSYNWLCKGTHKGRATRGLTSAGKKGRGLMYKGKGTEKVRPSVRANSKKAK.

Positions 160-194 are disordered; sequence RGLTSAGKKGRGLMYKGKGTEKVRPSVRANSKKAK.

The protein belongs to the eukaryotic ribosomal protein eL15 family.

The chain is Large ribosomal subunit protein eL15 from Methanococcus maripaludis (strain C7 / ATCC BAA-1331).